We begin with the raw amino-acid sequence, 149 residues long: Transcriptional repressor NrdR (149 aa).

A zinc finger spans residues 3–34 (CPFCTAVDTKVIDSRLVGDGSQVRRRRQCLVC). Residues 49–139 (PRVVKSDEIR…VYRSFEDVRD (91 aa)) form the ATP-cone domain.

It belongs to the NrdR family. The cofactor is Zn(2+).

Its function is as follows. Negatively regulates transcription of bacterial ribonucleotide reductase nrd genes and operons by binding to NrdR-boxes. The polypeptide is Transcriptional repressor NrdR (Proteus mirabilis (strain HI4320)).